The following is a 167-amino-acid chain: Large ribosomal subunit protein bL9 (167 aa).

This sequence belongs to the bacterial ribosomal protein bL9 family.

Binds to the 23S rRNA. This chain is Large ribosomal subunit protein bL9, found in Nitratidesulfovibrio vulgaris (strain ATCC 29579 / DSM 644 / CCUG 34227 / NCIMB 8303 / VKM B-1760 / Hildenborough) (Desulfovibrio vulgaris).